We begin with the raw amino-acid sequence, 178 residues long: Oligoribonuclease (178 aa).

One can recognise an Exonuclease domain in the interval 7 to 168 (LIWIDLEMTG…DDIRESIAEL (162 aa)). Tyrosine 128 is an active-site residue.

It belongs to the oligoribonuclease family.

It is found in the cytoplasm. Functionally, 3'-to-5' exoribonuclease specific for small oligoribonucleotides. This chain is Oligoribonuclease, found in Francisella tularensis subsp. tularensis (strain FSC 198).